The following is a 110-amino-acid chain: UPF0213 protein DVU_3309 (110 aa).

Residues 8–83 enclose the GIY-YIG domain; it reads EVWFVYLLRC…KRQPTDQKLA (76 aa).

This sequence belongs to the UPF0213 family.

The sequence is that of UPF0213 protein DVU_3309 from Nitratidesulfovibrio vulgaris (strain ATCC 29579 / DSM 644 / CCUG 34227 / NCIMB 8303 / VKM B-1760 / Hildenborough) (Desulfovibrio vulgaris).